The chain runs to 144 residues: Large ribosomal subunit protein uL15 (144 aa).

Positions 1 to 60 (MKMNTLKPAEGSKQSPKRLGRGIGSGLGKTGGRGHKGQTSRSGGTIRPGFEGGQQPLQRR) are disordered. The segment covering 21–31 (RGIGSGLGKTG) has biased composition (gly residues).

Belongs to the universal ribosomal protein uL15 family. In terms of assembly, part of the 50S ribosomal subunit.

Functionally, binds to the 23S rRNA. The protein is Large ribosomal subunit protein uL15 of Hahella chejuensis (strain KCTC 2396).